The sequence spans 856 residues: MVTDDSNSSGRIKSHVDDDDDGEEEEDRLEGLENRLSELKRKIQGERVRSIKEKFEANRKKVDAHVSPFSSAASSRATAEDNGNSNMLSSRMRMPLCKLNGFSHGVGDRDYVPTKDVISASVKLPIAERIPPYTTWIFLDRNQRMAEDQSVVGRRQIYYEQHGGETLICSDSEEEPEPEEEKREFSEGEDSIIWLIGQEYGMGEEVQDALCQLLSVDASDILERYNELKLKDKQNTEEFSNSGFKLGISLEKGLGAALDSFDNLFCRRCLVFDCRLHGCSQPLISASEKQPYWSDYEGDRKPCSKHCYLQLKAVREVPETCSNFASKAEEKASEEECSKAVSSDVPHAAASGVSLQVEKTDIGIKNVDSSSGVEQEHGIRGKREVPILKDSNDLPNLSNKKQKTAASDTKMSFVNSVPSLDQALDSTKGDQGGTTDNKVNRDSEADAKEVGEPIPDNSVHDGGSSICQPHHGSGNGAIIIAEMSETSRPSTEWNPIEKDLYLKGVEIFGRNSCLIARNLLSGLKTCLDVSNYMRENEVSVFRRSSTPNLLLDDGRTDPGNDNDEVPPRTRLFRRKGKTRKLKYSTKSAGHPSVWKRIAGGKNQSCKQYTPCGCLSMCGKDCPCLTNETCCEKYCGCSKSCKNRFRGCHCAKSQCRSRQCPCFAAGRECDPDVCRNCWVSCGDGSLGEAPRRGEGQCGNMRLLLRQQQRILLGKSDVAGWGAFLKNSVSKNEYLGEYTGELISHHEADKRGKIYDRANSSFLFDLNDQYVLDAQRKGDKLKFANHSAKPNCYAKVMFVAGDHRVGIFANERIEASEELFYDYRYGPDQAPVWARKPEGSKKDDSAITHRRARKHQSH.

Polar residues predominate over residues 1-11; that stretch reads MVTDDSNSSGR. Disordered stretches follow at residues 1–34, 66–87, and 366–473; these read MVTD…GLEN, VSPF…NSNM, and NVDS…HHGS. A compositionally biased stretch (acidic residues) spans 17–28; that stretch reads DDDDDGEEEEDR. Residues 22-49 are a coiled coil; that stretch reads GEEEEDRLEGLENRLSELKRKIQGERVR. The span at 68-87 shows a compositional bias: polar residues; sequence PFSSAASSRATAEDNGNSNM. The segment covering 374 to 392 has biased composition (basic and acidic residues); it reads EQEHGIRGKREVPILKDSN. Over residues 393 to 419 the composition is skewed to polar residues; it reads DLPNLSNKKQKTAASDTKMSFVNSVPS. Basic and acidic residues predominate over residues 438–451; the sequence is KVNRDSEADAKEVG. One can recognise an SANT domain in the interval 489 to 539; sequence PSTEWNPIEKDLYLKGVEIFGRNSCLIARNLLSGLKTCLDVSNYMRENEVS. One can recognise a CXC domain in the interval 594-693; that stretch reads WKRIAGGKNQ…SLGEAPRRGE (100 aa). The SET domain occupies 707–822; that stretch reads QRILLGKSDV…ASEELFYDYR (116 aa). Position 821 (Tyr821) interacts with S-adenosyl-L-methionine. Residues 827 to 856 are disordered; it reads QAPVWARKPEGSKKDDSAITHRRARKHQSH. Positions 833 to 845 are enriched in basic and acidic residues; that stretch reads RKPEGSKKDDSAI. The Nuclear localization signal motif lies at 838-845; the sequence is SKKDDSAI. Basic residues predominate over residues 846–856; sequence THRRARKHQSH.

This sequence belongs to the class V-like SAM-binding methyltransferase superfamily. Histone-lysine methyltransferase family. EZ subfamily. In terms of assembly, component of the plant homeodomain / polycomb repressive complex 2 (PHD-PRC2) large complex during prolonged cold, composed of core PRC2 components (VRN2, EZA1, FIE and MSI1), and three related PHD finger proteins (VIL1, VIL2 and VIN3) that mediates histone H3 trimethylation on 'Lys-27' H3K27me3. Interacts with TAF13. Interacts with EOL1. Interacts (via SANT domain) with HXK1 in the nucleus.

The protein resides in the nucleus. The enzyme catalyses L-lysyl(27)-[histone H3] + 3 S-adenosyl-L-methionine = N(6),N(6),N(6)-trimethyl-L-lysyl(27)-[histone H3] + 3 S-adenosyl-L-homocysteine + 3 H(+). In terms of biological role, polycomb group (PcG) protein. Catalytic subunit of some PcG multiprotein complex, which methylates 'Lys-27' of histone H3, leading to transcriptional repression of the affected target genes, mainly abscisic acid (ABA) responsive elements. PcG proteins act by forming multiprotein complexes, which are required to maintain the transcriptionally repressive state of homeotic genes throughout development. PcG proteins are not required to initiate repression, but to maintain it during later stages of development. Forms a nuclear complex with CLF and HXK1 to target common glucose-responsive genes and regulate glucose signaling by glucose-mediated gene repression. Affects the recruitment of HXK1 to the target chromatin. This is Histone-lysine N-methyltransferase EZA1 from Arabidopsis thaliana (Mouse-ear cress).